A 683-amino-acid chain; its full sequence is E3 ubiquitin-protein ligase RNF103 (683 aa).

4 helical membrane-spanning segments follow: residues 6-26 (FFLL…EAIV), 326-346 (LFVL…FITQ), 366-386 (LLII…LDSF), and 411-431 (MFYT…GLLI). The segment covering 525–542 (EEMSESSQDTENDSDSDN) has biased composition (acidic residues). Residues 525 to 548 (EEMSESSQDTENDSDSDNMDTFSS) form a disordered region. The segment at 619-661 (CVVCLENFENGCLLMGLPCGHVFHQNCIVMWLAGGRHCCPVCR) adopts an RING-type zinc-finger fold.

Interacts with DERL1 and VCP. In terms of tissue distribution, highly expressed in the normal cerebellum but not in the cerebral cortex.

Its subcellular location is the endoplasmic reticulum membrane. The enzyme catalyses S-ubiquitinyl-[E2 ubiquitin-conjugating enzyme]-L-cysteine + [acceptor protein]-L-lysine = [E2 ubiquitin-conjugating enzyme]-L-cysteine + N(6)-ubiquitinyl-[acceptor protein]-L-lysine.. It participates in protein modification; protein ubiquitination. Its function is as follows. Acts as an E2-dependent E3 ubiquitin-protein ligase, probably involved in the ER-associated protein degradation pathway. In Mus musculus (Mouse), this protein is E3 ubiquitin-protein ligase RNF103 (Rnf103).